The sequence spans 292 residues: 4-hydroxy-tetrahydrodipicolinate synthase (292 aa).

Pyruvate is bound at residue T45. Y133 (proton donor/acceptor) is an active-site residue. K161 (schiff-base intermediate with substrate) is an active-site residue. Position 203 (I203) interacts with pyruvate.

The protein belongs to the DapA family. Homotetramer; dimer of dimers.

The protein localises to the cytoplasm. It carries out the reaction L-aspartate 4-semialdehyde + pyruvate = (2S,4S)-4-hydroxy-2,3,4,5-tetrahydrodipicolinate + H2O + H(+). It participates in amino-acid biosynthesis; L-lysine biosynthesis via DAP pathway; (S)-tetrahydrodipicolinate from L-aspartate: step 3/4. Functionally, catalyzes the condensation of (S)-aspartate-beta-semialdehyde [(S)-ASA] and pyruvate to 4-hydroxy-tetrahydrodipicolinate (HTPA). The chain is 4-hydroxy-tetrahydrodipicolinate synthase from Shigella flexneri.